The chain runs to 239 residues: Aldehyde dehydrogenase, dimeric NADP-preferring (239 aa).

The active site involves Cys-30.

Belongs to the aldehyde dehydrogenase family. As to quaternary structure, homodimer.

Its subcellular location is the cytoplasm. The catalysed reaction is an aldehyde + NAD(+) + H2O = a carboxylate + NADH + 2 H(+). It carries out the reaction octanal + NAD(+) + H2O = octanoate + NADH + 2 H(+). In terms of biological role, ALDHs play a major role in the detoxification of alcohol-derived acetaldehyde. They are involved in the metabolism of corticosteroids, biogenic amines, neurotransmitters, and lipid peroxidation. Oxidizes medium and long chain aldehydes into non-toxic fatty acids. Preferentially oxidizes aromatic aldehyde substrates. Comprises about 50 percent of corneal epithelial soluble proteins. May play a role in preventing corneal damage caused by ultraviolet light. This chain is Aldehyde dehydrogenase, dimeric NADP-preferring (ALDH3A1), found in Bos taurus (Bovine).